Reading from the N-terminus, the 191-residue chain is Dephospho-CoA kinase (191 aa).

One can recognise a DPCK domain in the interval 3–191 (AIGITGSYAS…NLIANLECRV (189 aa)). 11–16 (ASGKTF) serves as a coordination point for ATP.

The protein belongs to the CoaE family.

The protein localises to the cytoplasm. The enzyme catalyses 3'-dephospho-CoA + ATP = ADP + CoA + H(+). It participates in cofactor biosynthesis; coenzyme A biosynthesis; CoA from (R)-pantothenate: step 5/5. Catalyzes the phosphorylation of the 3'-hydroxyl group of dephosphocoenzyme A to form coenzyme A. This chain is Dephospho-CoA kinase, found in Rickettsia bellii (strain RML369-C).